We begin with the raw amino-acid sequence, 159 residues long: Eukaryotic translation initiation factor 5A-1 (159 aa).

A compositionally biased stretch (basic and acidic residues) spans 1-12 (MSDEEHHFESKA). Residues 1-23 (MSDEEHHFESKADAGASKTYPQQ) form a disordered region. Hypusine is present on lysine 52.

This sequence belongs to the eIF-5A family. Lys-52 undergoes hypusination, a unique post-translational modification that consists in the addition of a butylamino group from spermidine to lysine side chain, leading to the formation of the unusual amino acid hypusine. eIF-5As are the only known proteins to undergo this modification, which is essential for their function.

Its function is as follows. Translation factor that promotes translation elongation and termination, particularly upon ribosome stalling at specific amino acid sequence contexts. Binds between the exit (E) and peptidyl (P) site of the ribosome and promotes rescue of stalled ribosome: specifically required for efficient translation of polyproline-containing peptides as well as other motifs that stall the ribosome. Acts as a ribosome quality control (RQC) cofactor by joining the RQC complex to facilitate peptidyl transfer during CAT tailing step. This chain is Eukaryotic translation initiation factor 5A-1 (EIF-5A1), found in Nicotiana plumbaginifolia (Leadwort-leaved tobacco).